The chain runs to 87 residues: Small ribosomal subunit protein bS18 (87 aa).

Belongs to the bacterial ribosomal protein bS18 family. As to quaternary structure, part of the 30S ribosomal subunit. Forms a tight heterodimer with protein bS6.

Functionally, binds as a heterodimer with protein bS6 to the central domain of the 16S rRNA, where it helps stabilize the platform of the 30S subunit. The chain is Small ribosomal subunit protein bS18 from Sulfurimonas denitrificans (strain ATCC 33889 / DSM 1251) (Thiomicrospira denitrificans (strain ATCC 33889 / DSM 1251)).